Here is a 249-residue protein sequence, read N- to C-terminus: Sulfate transporter CysZ (249 aa).

The next 4 membrane-spanning stretches (helical) occupy residues 26–46 (LFVLLPLAINLVLFVGLIYFA), 71–91 (VIWPLFVVLVAFMVFFSFTML), 150–170 (LFILSLIPVVNLIAAPLWLLF), and 206–226 (LGFGGIVYLALLIPLVNILMM).

The protein belongs to the CysZ family.

Its subcellular location is the cell inner membrane. Functionally, high affinity, high specificity proton-dependent sulfate transporter, which mediates sulfate uptake. Provides the sulfur source for the cysteine synthesis pathway. This Pseudomonas fluorescens (strain ATCC BAA-477 / NRRL B-23932 / Pf-5) protein is Sulfate transporter CysZ.